Reading from the N-terminus, the 485-residue chain is MTGGGDPVVRRDRFSGGPARSFLSSMDGDGRIFEADLAVDRAHVVMLAEQDVIGDEAAAAILGALADVEAAGFDALPPGEDVHEAIETAVVEAVGRDGGKLHTARSRNDEVAACIRYRLRADLLDAIEVVVALRSALADVAAAEAETVMPGFTHLQPAQPTTVAHWALSYAGTLARDTGRLCDAYGRTNESPLGAAAFAGTTFGVDRERTAALLGFDGVVANAADAAASRDFLLEAVSALASVAVTCSGLAADVVFFANRGFVEVSDDYASTSSIMPQKKNPDTMELVRATAGDAVGAQQALATTLQGLPRAYNRDLQRATGHAWTAVDGVTSAVEVAAGVVATAGWPADDLEAAAGEGFSTATGVADALAAGGLPFRTAHEVVALAAERGCEGATLDAVAAATEAVTGEPLSAVVEPAAVADALDPVGSVAARDSAGGPAPAAVEAAVADVRDGIDADEAALAAERASLADAADALAAEVSGYV.

This sequence belongs to the lyase 1 family. Argininosuccinate lyase subfamily.

It is found in the cytoplasm. The catalysed reaction is 2-(N(omega)-L-arginino)succinate = fumarate + L-arginine. It participates in amino-acid biosynthesis; L-arginine biosynthesis; L-arginine from L-ornithine and carbamoyl phosphate: step 3/3. The polypeptide is Argininosuccinate lyase (Halobacterium salinarum (strain ATCC 29341 / DSM 671 / R1)).